Here is a 217-residue protein sequence, read N- to C-terminus: Somatotropin (217 aa).

The N-terminal stretch at 1–26 is a signal peptide; sequence MAAGSRTSLLLAFALLCLPWLQEGSA. H44 serves as a coordination point for Zn(2+). Cysteines 79 and 191 form a disulfide. A Phosphoserine modification is found at S132. Position 200 (E200) interacts with Zn(2+). An intrachain disulfide couples C208 to C215.

Belongs to the somatotropin/prolactin family.

Its subcellular location is the secreted. Functionally, plays an important role in growth control. Its major role in stimulating body growth is to stimulate the liver and other tissues to secrete IGF1. It stimulates both the differentiation and proliferation of myoblasts. It also stimulates amino acid uptake and protein synthesis in muscle and other tissues. This Macaca mulatta (Rhesus macaque) protein is Somatotropin (GH1).